Reading from the N-terminus, the 199-residue chain is NAD(P)H dehydrogenase (quinone) (199 aa).

A Flavodoxin-like domain is found at 4–190 (VLVLYYSAYG…AGARYQGQVI (187 aa)). FMN-binding positions include 10 to 15 (SAYGHI) and 78 to 80 (TRF). Residue Tyr-12 participates in NAD(+) binding. Residue Trp-98 coordinates substrate. FMN is bound by residues 113-119 (STATQHG) and His-134.

This sequence belongs to the WrbA family. The cofactor is FMN.

The catalysed reaction is a quinone + NADH + H(+) = a quinol + NAD(+). The enzyme catalyses a quinone + NADPH + H(+) = a quinol + NADP(+). This chain is NAD(P)H dehydrogenase (quinone), found in Rhodopseudomonas palustris (strain BisA53).